A 687-amino-acid polypeptide reads, in one-letter code: Chloride channel protein ClC-Kb (687 aa).

The Cytoplasmic segment spans residues 1–50 (MEEFVGLREGSSGNPVTLQELWGPCPRIRRGIRGGLEWLKQKLFRLGEDW). The next 2 helical transmembrane spans lie at 51 to 82 (YFLM…QWLY) and 91 to 111 (LRYL…SGFS). The helical intramembrane region spans 116–127 (PSSGGSGIPEVK). Position 121 (Ser121) interacts with chloride. The next 2 helical transmembrane spans lie at 141–160 (IKNF…CGST) and 161–180 (LFLG…AAYL). An N-linked (GlcNAc...) asparagine glycan is attached at Asn193. Positions 203–224 (AAAAVGVATVFAAPFSGVLFSI) form an intramembrane region, helical. Residues 236-255 (YWRGFFAATCGAFMFRLLAV) form a helical membrane-spanning segment. Positions 259, 261, 278, and 281 each coordinate Ca(2+). 2 consecutive transmembrane segments (helical) span residues 282-310 (IFFF…FGFI) and 325-342 (PVYS…TYPP). Residues 349–360 (ASRLSMKQHLDS) constitute an intramembrane region (helical). Helical transmembrane passes span 400–420 (GTLA…TTIP) and 421–440 (MPAG…GRLF). Phe426 contributes to the chloride binding site. Positions 464–496 (GGYALAGAAAFSGAVTHTISTALLAFEVTGQIV) form an intramembrane region, helical. Residues 500 to 520 (PVLMAVLAANAIAQSCQPSFY) form a helical membrane-spanning segment. Residues 521-687 (DGTVIVKKLP…SNLTNPPAPK (167 aa)) are Cytoplasmic-facing. CBS domains are found at residues 551 to 609 (MNHS…EPPS) and 626 to 684 (CPTE…TNPP).

The protein belongs to the chloride channel (TC 2.A.49) family. CLCNKB subfamily. Homodimer. Interacts with BSND. N-glycosylated.

The protein localises to the basolateral cell membrane. It catalyses the reaction chloride(in) = chloride(out). It carries out the reaction iodide(out) = iodide(in). The enzyme catalyses nitrate(in) = nitrate(out). The catalysed reaction is bromide(in) = bromide(out). With respect to regulation, activated by extracellular Ca(2+) and inhibited by extracellular acidic pH. Functionally, anion-selective channel permeable to small monovalent anions with ion selectivity for chloride &gt; bromide &gt; nitrate &gt; iodide. Forms a homodimeric channel where each subunit has its own ion conduction pathway. May conduct double-barreled currents controlled by two types of gates, two fast gates that control each subunit independently and a slow common gate that opens and shuts off both subunits simultaneously. Assembles with the regulatory subunit BSND/Barttin for sorting at the basolateral plasma membrane domain and functional switch to the ion conducting state. CLCNKB:BSND channels display mostly a linear current-voltage relationship controlled by common gate. Mediates chloride conductance along nephron segments, namely the thick ascending limb of Henle's loop, convoluted tubule and the collecting duct, contributing to the maintenance of systemic acid-base and electrolyte homeostasis. Conducts chloride currents in the stria vascularis of the inner ear to establish the endocochlear potential necessary for normal hearing. In Homo sapiens (Human), this protein is Chloride channel protein ClC-Kb.